The following is a 312-amino-acid chain: Pyridoxal kinase (312 aa).

Residue Met-1 is modified to N-acetylmethionine. Pyridoxal contacts are provided by Ser-12 and Thr-47. Pyridoxal 5'-phosphate is bound at residue Thr-47. Ser-59 carries the post-translational modification Phosphoserine. Asp-113 lines the ATP pocket. Asp-113 is a Na(+) binding site. Asp-118 provides a ligand contact to Mg(2+). Thr-148 serves as a coordination point for Na(+). Residue Asn-150 to Glu-153 coordinates ATP. Phosphoserine is present on Ser-164. Thr-186 is a Na(+) binding site. Residue Thr-186 to Ser-187 participates in ATP binding. Ser-213 carries the phosphoserine modification. Residues Val-226 to Pro-228 and Thr-233 each bind ATP. Gly-234 to Asp-235 contacts pyridoxal 5'-phosphate. Asp-235 serves as the catalytic Proton acceptor. Ser-285 bears the Phosphoserine mark.

This sequence belongs to the pyridoxine kinase family. Homodimer. Requires Zn(2+) as cofactor. Mg(2+) serves as cofactor.

Its subcellular location is the cytoplasm. The protein resides in the cytosol. The catalysed reaction is pyridoxal + ATP = pyridoxal 5'-phosphate + ADP + H(+). The enzyme catalyses pyridoxamine + ATP = pyridoxamine 5'-phosphate + ADP + H(+). It carries out the reaction pyridoxine + ATP = pyridoxine 5'-phosphate + ADP + H(+). The protein operates within cofactor metabolism; pyridoxal 5'-phosphate salvage; pyridoxal 5'-phosphate from pyridoxal: step 1/1. Its pathway is cofactor metabolism; pyridoxal 5'-phosphate salvage; pyridoxine 5'-phosphate from pyridoxine: step 1/1. It functions in the pathway cofactor metabolism; pyridoxal 5'-phosphate salvage; pyridoxamine 5'-phosphate from pyridoxamine: step 1/1. With respect to regulation, activity is increased in the presence of K(+)or Na(+). In terms of biological role, catalyzes the phosphorylation of the dietary vitamin B6 vitamers pyridoxal (PL), pyridoxine (PN) and pyridoxamine (PM) to form pyridoxal 5'-phosphate (PLP), pyridoxine 5'-phosphate (PNP) and pyridoxamine 5'-phosphate (PMP), respectively. PLP is the active form of vitamin B6, and acts as a cofactor for over 140 different enzymatic reactions. This chain is Pyridoxal kinase (Pdxk), found in Rattus norvegicus (Rat).